A 388-amino-acid chain; its full sequence is Phosphopentomutase (388 aa).

Residues Asp10, Asp282, His287, Asp323, His324, and His335 each contribute to the Mn(2+) site.

The protein belongs to the phosphopentomutase family. Mn(2+) is required as a cofactor.

It localises to the cytoplasm. The catalysed reaction is 2-deoxy-alpha-D-ribose 1-phosphate = 2-deoxy-D-ribose 5-phosphate. The enzyme catalyses alpha-D-ribose 1-phosphate = D-ribose 5-phosphate. The protein operates within carbohydrate degradation; 2-deoxy-D-ribose 1-phosphate degradation; D-glyceraldehyde 3-phosphate and acetaldehyde from 2-deoxy-alpha-D-ribose 1-phosphate: step 1/2. In terms of biological role, isomerase that catalyzes the conversion of deoxy-ribose 1-phosphate (dRib-1-P) and ribose 1-phosphate (Rib-1-P) to deoxy-ribose 5-phosphate (dRib-5-P) and ribose 5-phosphate (Rib-5-P), respectively. This chain is Phosphopentomutase, found in Carboxydothermus hydrogenoformans (strain ATCC BAA-161 / DSM 6008 / Z-2901).